A 126-amino-acid chain; its full sequence is Holo-[acyl-carrier-protein] synthase (126 aa).

The Mg(2+) site is built by aspartate 9 and glutamate 58.

It belongs to the P-Pant transferase superfamily. AcpS family. Mg(2+) serves as cofactor.

The protein localises to the cytoplasm. It catalyses the reaction apo-[ACP] + CoA = holo-[ACP] + adenosine 3',5'-bisphosphate + H(+). Transfers the 4'-phosphopantetheine moiety from coenzyme A to a Ser of acyl-carrier-protein. This Klebsiella pneumoniae (strain 342) protein is Holo-[acyl-carrier-protein] synthase.